The following is a 61-amino-acid chain: Small ribosomal subunit protein uS14 (61 aa).

4 residues coordinate Zn(2+): cysteine 24, cysteine 27, cysteine 40, and cysteine 43.

This sequence belongs to the universal ribosomal protein uS14 family. Zinc-binding uS14 subfamily. In terms of assembly, part of the 30S ribosomal subunit. Contacts proteins S3 and S10. The cofactor is Zn(2+).

In terms of biological role, binds 16S rRNA, required for the assembly of 30S particles and may also be responsible for determining the conformation of the 16S rRNA at the A site. The protein is Small ribosomal subunit protein uS14 of Herpetosiphon aurantiacus (strain ATCC 23779 / DSM 785 / 114-95).